The chain runs to 435 residues: Nucleoredoxin (435 aa).

Position 2 is an N-acetylserine (Ser2). In terms of domain architecture, Thioredoxin spans 167–321 (PKPFREVIAG…VLELSDSNAV (155 aa)).

Belongs to the nucleoredoxin family. In terms of assembly, associates with the phosphatase 2A holoenzyme. Interacts with PPP2CA; the interaction is direct. Interacts with DVL1 (via PDZ domain); the interaction is direct and regulated by oxidative stress.

It is found in the cytoplasm. The protein localises to the cytosol. The protein resides in the nucleus. It catalyses the reaction [protein]-dithiol + NAD(+) = [protein]-disulfide + NADH + H(+). It carries out the reaction [protein]-dithiol + NADP(+) = [protein]-disulfide + NADPH + H(+). Functions as a redox-dependent negative regulator of the Wnt signaling pathway, possibly by preventing ubiquitination of DVL3 by the BCR(KLHL12) complex. May also function as a transcriptional regulator act as a regulator of protein phosphatase 2A (PP2A). This is Nucleoredoxin (NXN) from Bos taurus (Bovine).